The following is a 291-amino-acid chain: 4-diphosphocytidyl-2-C-methyl-D-erythritol kinase (291 aa).

Lysine 11 is a catalytic residue. 95-105 (PVAAGMAGGSS) provides a ligand contact to ATP. Residue aspartate 137 is part of the active site.

The protein belongs to the GHMP kinase family. IspE subfamily.

The catalysed reaction is 4-CDP-2-C-methyl-D-erythritol + ATP = 4-CDP-2-C-methyl-D-erythritol 2-phosphate + ADP + H(+). The protein operates within isoprenoid biosynthesis; isopentenyl diphosphate biosynthesis via DXP pathway; isopentenyl diphosphate from 1-deoxy-D-xylulose 5-phosphate: step 3/6. Functionally, catalyzes the phosphorylation of the position 2 hydroxy group of 4-diphosphocytidyl-2C-methyl-D-erythritol. The sequence is that of 4-diphosphocytidyl-2-C-methyl-D-erythritol kinase from Lachnoclostridium phytofermentans (strain ATCC 700394 / DSM 18823 / ISDg) (Clostridium phytofermentans).